Reading from the N-terminus, the 161-residue chain is Pleiotrophin-A (161 aa).

The signal sequence occupies residues 1–23; it reads MRHQHGLFMLALLAFLFVITVLG. 5 disulfides stabilise this stretch: cysteine 41/cysteine 70, cysteine 49/cysteine 79, cysteine 56/cysteine 83, cysteine 93/cysteine 125, and cysteine 103/cysteine 135. Chondroitin sulfate binding regions lie at residues 86-93 and 117-125; these read KKQFGAEC and KRALHNAEC. The tract at residues 136–161 is disordered; sequence GKVTKPKLQESKKKKKEGKNKEKLLD. The tract at residues 141-161 is chondroitin sulfate A binding; that stretch reads PKLQESKKKKKEGKNKEKLLD.

Belongs to the pleiotrophin family. Expressed in high levels in brain and eye. Lower levels in bone. In the tailbud embryo stage, it is expressed exclusively in the central nervous system, especially in the hind region of the brain.

The protein localises to the secreted. Its function is as follows. Secreted growth factor that mediates its signal through cell-surface proteoglycan and non-proteoglycan receptors. Binds cell-surface proteoglycan receptor via their chondroitin sulfate (CS) groups. Thereby regulates many processes like cell proliferation, cell survival, cell growth, cell differentiation and cell migration. Has antibacterial activity against both Gram-positive and Gram-negative bacteria. This chain is Pleiotrophin-A (ptn-a), found in Xenopus laevis (African clawed frog).